The following is a 149-amino-acid chain: Nucleoside diphosphate kinase (149 aa).

ATP-binding residues include Lys9, Phe57, Arg85, Thr91, Arg102, and Asn112. His115 (pros-phosphohistidine intermediate) is an active-site residue.

This sequence belongs to the NDK family. In terms of assembly, homotetramer. It depends on Mg(2+) as a cofactor.

Its subcellular location is the cytoplasm. The enzyme catalyses a 2'-deoxyribonucleoside 5'-diphosphate + ATP = a 2'-deoxyribonucleoside 5'-triphosphate + ADP. It catalyses the reaction a ribonucleoside 5'-diphosphate + ATP = a ribonucleoside 5'-triphosphate + ADP. Major role in the synthesis of nucleoside triphosphates other than ATP. The ATP gamma phosphate is transferred to the NDP beta phosphate via a ping-pong mechanism, using a phosphorylated active-site intermediate. The sequence is that of Nucleoside diphosphate kinase from Herpetosiphon aurantiacus (strain ATCC 23779 / DSM 785 / 114-95).